The chain runs to 113 residues: Non-specific lipid-transfer protein 6 (113 aa).

The first 19 residues, 1-19 (MRSLLLAVCLVLALHCGEA), serve as a signal peptide directing secretion. 4 disulfides stabilise this stretch: Cys-23-Cys-70, Cys-33-Cys-47, Cys-48-Cys-95, and Cys-68-Cys-109.

Belongs to the plant LTP family.

In terms of biological role, plant non-specific lipid-transfer proteins transfer phospholipids as well as galactolipids across membranes. May play a role in wax or cutin deposition in the cell walls of expanding epidermal cells and certain secretory tissues. This chain is Non-specific lipid-transfer protein 6 (LTP6), found in Arabidopsis thaliana (Mouse-ear cress).